A 470-amino-acid polypeptide reads, in one-letter code: 3-isopropylmalate dehydratase large subunit (470 aa).

[4Fe-4S] cluster-binding residues include cysteine 351, cysteine 411, and cysteine 414.

It belongs to the aconitase/IPM isomerase family. LeuC type 1 subfamily. In terms of assembly, heterodimer of LeuC and LeuD. It depends on [4Fe-4S] cluster as a cofactor.

It catalyses the reaction (2R,3S)-3-isopropylmalate = (2S)-2-isopropylmalate. The protein operates within amino-acid biosynthesis; L-leucine biosynthesis; L-leucine from 3-methyl-2-oxobutanoate: step 2/4. Catalyzes the isomerization between 2-isopropylmalate and 3-isopropylmalate, via the formation of 2-isopropylmaleate. This is 3-isopropylmalate dehydratase large subunit from Shewanella frigidimarina (strain NCIMB 400).